The sequence spans 330 residues: Methylthioribose-1-phosphate isomerase (330 aa).

Residues 49–51, Arg-83, and Gln-179 each bind substrate; that span reads RGA. Asp-220 functions as the Proton donor in the catalytic mechanism. A substrate-binding site is contributed by 230 to 231; it reads NK.

This sequence belongs to the eIF-2B alpha/beta/delta subunits family. MtnA subfamily.

The enzyme catalyses 5-(methylsulfanyl)-alpha-D-ribose 1-phosphate = 5-(methylsulfanyl)-D-ribulose 1-phosphate. Its pathway is amino-acid biosynthesis; L-methionine biosynthesis via salvage pathway; L-methionine from S-methyl-5-thio-alpha-D-ribose 1-phosphate: step 1/6. Catalyzes the interconversion of methylthioribose-1-phosphate (MTR-1-P) into methylthioribulose-1-phosphate (MTRu-1-P). This Thermus thermophilus (strain ATCC BAA-163 / DSM 7039 / HB27) protein is Methylthioribose-1-phosphate isomerase.